The following is a 180-amino-acid chain: Photosystem II extrinsic protein V (180 aa).

Residues 1-40 (MFSKAFSFQKVFAPARRRLLVLLLAALMAGFGWGLAPVFA) form the signal peptide. Heme c-binding residues include Cys-73, Cys-76, His-77, and His-128.

It belongs to the cytochrome c family. PsbV subfamily. PSII is composed of 1 copy each of membrane proteins PsbA, PsbB, PsbC, PsbD, PsbE, PsbF, PsbH, PsbI, PsbJ, PsbK, PsbL, PsbM, PsbT, PsbX, PsbY, PsbZ, Psb30/Ycf12, peripheral proteins PsbO, CyanoQ (PsbQ), PsbU, PsbV and a large number of cofactors. It forms dimeric complexes. The cofactor is heme c.

Its subcellular location is the cellular thylakoid membrane. Its function is as follows. One of the extrinsic, lumenal subunits of photosystem II (PSII). PSII is a light-driven water plastoquinone oxidoreductase, using light energy to abstract electrons from H(2)O, generating a proton gradient subsequently used for ATP formation. The extrinsic proteins stabilize the structure of photosystem II oxygen-evolving complex (OEC), the ion environment of oxygen evolution and protect the OEC against heat-induced inactivation. Low-potential cytochrome c that plays a role in the OEC of PSII. The sequence is that of Photosystem II extrinsic protein V from Synechococcus sp. (strain JA-2-3B'a(2-13)) (Cyanobacteria bacterium Yellowstone B-Prime).